We begin with the raw amino-acid sequence, 498 residues long: GTPase Der (498 aa).

2 EngA-type G domains span residues 3-167 (PVVA…FDDL) and 210-383 (IKLA…KSAT). GTP is bound by residues 9-16 (GRPNVGKS), 57-61 (DTGGI), 119-122 (NKID), 216-223 (GRPNVGKS), 263-267 (DTAGV), and 328-331 (NKWD). The region spanning 384–468 (TRVGTSVLTR…PIRINFQNSE (85 aa)) is the KH-like domain.

The protein belongs to the TRAFAC class TrmE-Era-EngA-EngB-Septin-like GTPase superfamily. EngA (Der) GTPase family. As to quaternary structure, associates with the 50S ribosomal subunit.

Its function is as follows. GTPase that plays an essential role in the late steps of ribosome biogenesis. This is GTPase Der from Vibrio parahaemolyticus serotype O3:K6 (strain RIMD 2210633).